A 407-amino-acid polypeptide reads, in one-letter code: Phosphopentomutase (407 aa).

The Mn(2+) site is built by Asp10, Asp306, His311, Asp347, His348, and His359.

Belongs to the phosphopentomutase family. Mn(2+) is required as a cofactor.

The protein localises to the cytoplasm. It catalyses the reaction 2-deoxy-alpha-D-ribose 1-phosphate = 2-deoxy-D-ribose 5-phosphate. It carries out the reaction alpha-D-ribose 1-phosphate = D-ribose 5-phosphate. It functions in the pathway carbohydrate degradation; 2-deoxy-D-ribose 1-phosphate degradation; D-glyceraldehyde 3-phosphate and acetaldehyde from 2-deoxy-alpha-D-ribose 1-phosphate: step 1/2. Functionally, isomerase that catalyzes the conversion of deoxy-ribose 1-phosphate (dRib-1-P) and ribose 1-phosphate (Rib-1-P) to deoxy-ribose 5-phosphate (dRib-5-P) and ribose 5-phosphate (Rib-5-P), respectively. In Enterobacter sp. (strain 638), this protein is Phosphopentomutase.